Consider the following 765-residue polypeptide: Kinesin-like protein KIN-14S (765 aa).

In terms of domain architecture, Kinesin motor spans 132 to 456; it reads NIRVFCRCRP…LNFASRVRGI (325 aa). ATP is bound at residue 215-222; the sequence is GQTGTGKT. Positions 469–534 form a coiled coil; that stretch reads ELLKSKQMAE…ERKTRIKQES (66 aa). Disordered stretches follow at residues 581-613 and 654-678; these read MPQQQPSQGHSKRFSDTTFKENNNSNRRSSSMD and LRPEPSSLSSMETPSRPPPSFRGDP. Positions 602–611 are enriched in low complexity; it reads NNNSNRRSSS.

Belongs to the TRAFAC class myosin-kinesin ATPase superfamily. Kinesin family. KIN-14 subfamily.

This is Kinesin-like protein KIN-14S from Arabidopsis thaliana (Mouse-ear cress).